Consider the following 557-residue polypeptide: Formate--tetrahydrofolate ligase 2 (557 aa).

An ATP-binding site is contributed by 66–73 (TPAGEGKT).

The protein belongs to the formate--tetrahydrofolate ligase family.

The catalysed reaction is (6S)-5,6,7,8-tetrahydrofolate + formate + ATP = (6R)-10-formyltetrahydrofolate + ADP + phosphate. The protein operates within one-carbon metabolism; tetrahydrofolate interconversion. The sequence is that of Formate--tetrahydrofolate ligase 2 from Streptococcus pyogenes serotype M3 (strain ATCC BAA-595 / MGAS315).